The primary structure comprises 493 residues: Activin receptor type-1C (493 aa).

Residues 1-20 (MTRALCSALRQALLLLAAAA) form the signal peptide. Residues 22–113 (LSPGLKCVCL…PNAPKLGPME (92 aa)) lie on the Extracellular side of the membrane. Residues 114–134 (LAIIITVPVCLLSIAAMLTVW) form a helical membrane-spanning segment. At 135-493 (ACQGRQCSYR…QLCVKEDCKA (359 aa)) the chain is on the cytoplasmic side. Residues 165–194 (KTLKDLIYDVTASGSGSGLPLLVQRTIART) form the GS domain. Residues 195 to 485 (IVLQEIVGKG…LRIKKTISQL (291 aa)) form the Protein kinase domain. Residues 201–209 (VGKGRFGEV) and lysine 222 each bind ATP. Aspartate 323 functions as the Proton acceptor in the catalytic mechanism.

Belongs to the protein kinase superfamily. TKL Ser/Thr protein kinase family. TGFB receptor subfamily. Binds the type 2 receptor protein ACVR2A. The cofactor is Mg(2+). Requires Mn(2+) as cofactor. As to expression, present in pancreas, heart, colon, small intestine, ovary and the hippocampus, medulla oblongata and putamen of the brain. Isoform 1, isoform 2, isoform 3 and isoform 4 are all expressed in the placenta throughout pregnancy.

It localises to the membrane. It catalyses the reaction L-threonyl-[receptor-protein] + ATP = O-phospho-L-threonyl-[receptor-protein] + ADP + H(+). The catalysed reaction is L-seryl-[receptor-protein] + ATP = O-phospho-L-seryl-[receptor-protein] + ADP + H(+). In terms of biological role, serine/threonine protein kinase which forms a receptor complex on ligand binding. The receptor complex consists of 2 type II and 2 type I transmembrane serine/threonine kinases. Type II receptors phosphorylate and activate type I receptors which autophosphorylate, then bind and activate SMAD transcriptional regulators, SMAD2 and SMAD3. Receptor for activin AB, activin B, activin E and NODAL. Upon NODAL binding, activation results in increased apoptosis and reduced proliferation through suppression of AKT signaling and the activation of Smad2-dependent signaling pathway in pancreatic beta-cells, trophoblasts, epithelial or neuronal cells. Acts as a positive regulator for macrophage activation partially through down-regulation of PPARG expression. The sequence is that of Activin receptor type-1C from Homo sapiens (Human).